The primary structure comprises 207 residues: LexA repressor (207 aa).

Positions V28–A48 form a DNA-binding region, H-T-H motif. Residues S129 and K167 each act as for autocatalytic cleavage activity in the active site.

Belongs to the peptidase S24 family. In terms of assembly, homodimer.

It carries out the reaction Hydrolysis of Ala-|-Gly bond in repressor LexA.. Its function is as follows. Represses a number of genes involved in the response to DNA damage (SOS response), including recA and lexA. In the presence of single-stranded DNA, RecA interacts with LexA causing an autocatalytic cleavage which disrupts the DNA-binding part of LexA, leading to derepression of the SOS regulon and eventually DNA repair. This Brevibacillus brevis (strain 47 / JCM 6285 / NBRC 100599) protein is LexA repressor.